The primary structure comprises 207 residues: Holliday junction branch migration complex subunit RuvA (207 aa).

The interval 1-64 is domain I; sequence MIGRLRGNLL…EDAQLLYGFN (64 aa). Residues 65–143 are domain II; it reads TKNERALFRE…GWGAGDLFTP (79 aa). A flexible linker region spans residues 144–158; it reads ATDAAPMDDGSEFIT. Residues 159 to 207 form a domain III region; sequence SPQSAVDEAVSALIALGYKPQQASKTVSQVAKPDMTSEVLIRESLKSMI.

This sequence belongs to the RuvA family. As to quaternary structure, homotetramer. Forms an RuvA(8)-RuvB(12)-Holliday junction (HJ) complex. HJ DNA is sandwiched between 2 RuvA tetramers; dsDNA enters through RuvA and exits via RuvB. An RuvB hexamer assembles on each DNA strand where it exits the tetramer. Each RuvB hexamer is contacted by two RuvA subunits (via domain III) on 2 adjacent RuvB subunits; this complex drives branch migration. In the full resolvosome a probable DNA-RuvA(4)-RuvB(12)-RuvC(2) complex forms which resolves the HJ.

The protein resides in the cytoplasm. Functionally, the RuvA-RuvB-RuvC complex processes Holliday junction (HJ) DNA during genetic recombination and DNA repair, while the RuvA-RuvB complex plays an important role in the rescue of blocked DNA replication forks via replication fork reversal (RFR). RuvA specifically binds to HJ cruciform DNA, conferring on it an open structure. The RuvB hexamer acts as an ATP-dependent pump, pulling dsDNA into and through the RuvAB complex. HJ branch migration allows RuvC to scan DNA until it finds its consensus sequence, where it cleaves and resolves the cruciform DNA. The polypeptide is Holliday junction branch migration complex subunit RuvA (Aliivibrio fischeri (strain MJ11) (Vibrio fischeri)).